Here is a 458-residue protein sequence, read N- to C-terminus: cAMP-dependent protein kinase regulatory subunit (458 aa).

Positions 28–222 (QFAANYFNKK…GLESAVGKNF (195 aa)) are dimerization and phosphorylation. Position 184 is a phosphoserine (S184). 3',5'-cyclic AMP-binding positions include 223 to 338 (LFNK…FLKS), E288, R297, 341 to 457 (LLKS…RADK), E407, and R416.

This sequence belongs to the cAMP-dependent kinase regulatory chain family. Tetramer, composed of 2 regulatory (R) and 2 catalytic (C) subunits. In the presence of cAMP it dissociates into 2 active monomeric C subunits and an R dimer.

This chain is cAMP-dependent protein kinase regulatory subunit (PKAR), found in Eremothecium gossypii (strain ATCC 10895 / CBS 109.51 / FGSC 9923 / NRRL Y-1056) (Yeast).